Consider the following 153-residue polypeptide: ORM1-like protein 3 (153 aa).

The Cytoplasmic portion of the chain corresponds to 1-21 (MNVGTAHSEVNPNTRVMNSRG). A run of 2 helical transmembrane segments spans residues 22-42 (IWLS…SIPF) and 43-63 (VSVP…MYIF). The Cytoplasmic portion of the chain corresponds to 64–94 (LHTVKGTPFETPDQGKARLLTHWEQMDYGVQ). Residues 95–117 (FTASRKFLTITPIILYFLTSFYT) traverse the membrane as a helical segment. Over 118–121 (KYDR) the chain is Extracellular. Residues 122–142 (VHFVINTISLLTVLIPKLPQF) form a helical membrane-spanning segment. A Hydroxyproline modification is found at Pro-137. Residues 143 to 153 (HGVRLFGINKY) lie on the Cytoplasmic side of the membrane.

It belongs to the ORM family. In terms of assembly, ceramide-sensitive subunit of the serine palmitoyltransferase (SPT) complex, which is also composed of SPTLC1, SPTLC2/3 and SPTSSA/B. Post-translationally, when hydroxylated at Pro-137, ubiquitinated via 'Lys-48'-linkage, leading to proteasomal degradation. In endothelial cells, ORMDL3 proteasomal degradation is controlled by the sphingosine 1-phosphate receptor signaling pathway.

Its subcellular location is the endoplasmic reticulum membrane. Its function is as follows. Plays an essential role in the homeostatic regulation of sphingolipid de novo biosynthesis by modulating the activity of the serine palmitoyltransferase (SPT) in response to ceramide levels. When complexed to SPT, the binding of ceramides to its N-terminus stabilizes a conformation that block SPT substrate entry, hence preventing SPT catalytic activity. Through this mechanism, maintains ceramide levels at sufficient concentrations for the production of complex sphingolipids, but which prevents the accumulation of ceramides to levels that trigger apoptosis. The sequence is that of ORM1-like protein 3 (ormdl3) from Danio rerio (Zebrafish).